The primary structure comprises 248 residues: Ribosomal RNA small subunit methyltransferase J (248 aa).

Residues 101–102, 117–118, 153–154, and aspartate 171 contribute to the S-adenosyl-L-methionine site; these read RD, ER, and SS.

This sequence belongs to the methyltransferase superfamily. RsmJ family.

It localises to the cytoplasm. The enzyme catalyses guanosine(1516) in 16S rRNA + S-adenosyl-L-methionine = N(2)-methylguanosine(1516) in 16S rRNA + S-adenosyl-L-homocysteine + H(+). Specifically methylates the guanosine in position 1516 of 16S rRNA. This Pectobacterium atrosepticum (strain SCRI 1043 / ATCC BAA-672) (Erwinia carotovora subsp. atroseptica) protein is Ribosomal RNA small subunit methyltransferase J.